The sequence spans 41 residues: Large ribosomal subunit protein bL36 (41 aa).

This sequence belongs to the bacterial ribosomal protein bL36 family.

The polypeptide is Large ribosomal subunit protein bL36 (Gluconobacter oxydans (strain 621H) (Gluconobacter suboxydans)).